A 125-amino-acid polypeptide reads, in one-letter code: Large ribosomal subunit protein bL12 (125 aa).

Belongs to the bacterial ribosomal protein bL12 family. As to quaternary structure, homodimer. Part of the ribosomal stalk of the 50S ribosomal subunit. Forms a multimeric L10(L12)X complex, where L10 forms an elongated spine to which 2 to 4 L12 dimers bind in a sequential fashion. Binds GTP-bound translation factors.

Forms part of the ribosomal stalk which helps the ribosome interact with GTP-bound translation factors. Is thus essential for accurate translation. This Azoarcus sp. (strain BH72) protein is Large ribosomal subunit protein bL12.